A 636-amino-acid chain; its full sequence is DNA-directed RNA polymerase subunit beta' (636 aa).

Cysteine 70, cysteine 72, cysteine 85, and cysteine 88 together coordinate Zn(2+). Mg(2+) contacts are provided by aspartate 471, aspartate 473, and aspartate 475.

This sequence belongs to the RNA polymerase beta' chain family. RpoC1 subfamily. Requires Mg(2+) as cofactor. It depends on Zn(2+) as a cofactor.

The protein localises to the plastid. Its subcellular location is the cyanelle. It catalyses the reaction RNA(n) + a ribonucleoside 5'-triphosphate = RNA(n+1) + diphosphate. Its function is as follows. DNA-dependent RNA polymerase catalyzes the transcription of DNA into RNA using the four ribonucleoside triphosphates as substrates. In Cyanophora paradoxa, this protein is DNA-directed RNA polymerase subunit beta'.